The chain runs to 94 residues: Co-chaperonin GroES (94 aa).

Belongs to the GroES chaperonin family. As to quaternary structure, heptamer of 7 subunits arranged in a ring. Interacts with the chaperonin GroEL.

It is found in the cytoplasm. Functionally, together with the chaperonin GroEL, plays an essential role in assisting protein folding. The GroEL-GroES system forms a nano-cage that allows encapsulation of the non-native substrate proteins and provides a physical environment optimized to promote and accelerate protein folding. GroES binds to the apical surface of the GroEL ring, thereby capping the opening of the GroEL channel. This Streptococcus agalactiae serotype III (strain NEM316) protein is Co-chaperonin GroES.